A 164-amino-acid polypeptide reads, in one-letter code: MEAPRGNLRAVALIAGDNNVRGCLQFVQDISGTTHVTGKISGLSPGFHGFHIHSFGDTTNGCISTGPHFNPLNRVHGPPNEEERHAGDLGNILAGSNGVAEILIKDKHIPLSGQYSILGRAVVVHADPDDLGKGGHKLSKSTGNAGSRVGCGIIGLQSSADAKL.

His-51, His-53, and His-68 together coordinate Cu cation. The cysteines at positions 62 and 151 are disulfide-linked. Zn(2+)-binding residues include His-68, His-76, His-85, and Asp-88. His-125 contacts Cu cation. The short motif at 162–164 is the Peroxisome localization signal element; sequence AKL.

It belongs to the Cu-Zn superoxide dismutase family. In terms of assembly, homodimer. The cofactor is Cu cation. It depends on Zn(2+) as a cofactor. Expressed in leaves (at protein level).

It localises to the peroxisome. It carries out the reaction 2 superoxide + 2 H(+) = H2O2 + O2. Functionally, destroys radicals which are normally produced within the cells and which are toxic to biological systems. The sequence is that of Superoxide dismutase [Cu-Zn] 3 (CSD3) from Arabidopsis thaliana (Mouse-ear cress).